A 98-amino-acid chain; its full sequence is NADH-ubiquinone oxidoreductase chain 4L (98 aa).

Transmembrane regions (helical) follow at residues 1 to 21, 29 to 49, and 61 to 81; these read MSLVYMNIMTAFMVSLAGLLM, SLLCLEGMMLSLFVLATLTIL, and IILLVFGACEAALGLSLLVMV.

It belongs to the complex I subunit 4L family. In terms of assembly, core subunit of respiratory chain NADH dehydrogenase (Complex I) which is composed of 45 different subunits.

It is found in the mitochondrion inner membrane. The enzyme catalyses a ubiquinone + NADH + 5 H(+)(in) = a ubiquinol + NAD(+) + 4 H(+)(out). Core subunit of the mitochondrial membrane respiratory chain NADH dehydrogenase (Complex I) which catalyzes electron transfer from NADH through the respiratory chain, using ubiquinone as an electron acceptor. Part of the enzyme membrane arm which is embedded in the lipid bilayer and involved in proton translocation. This chain is NADH-ubiquinone oxidoreductase chain 4L (MT-ND4L), found in Muntiacus vuquangensis (Giant muntjac).